A 110-amino-acid polypeptide reads, in one-letter code: MTITITDRAFERIYELIELEKDKNLVLRVSVDSGGCSGLMYNYELVSKDNIEKDDYVFTRHNATIIIDSISQKFMLNCTLDFIEELGSSYFNVSNPQAKAKCGCGNSFSV.

Belongs to the HesB/IscA family.

This is an uncharacterized protein from Rickettsia prowazekii (strain Madrid E).